We begin with the raw amino-acid sequence, 362 residues long: C-C chemokine receptor type 10 (362 aa).

The Extracellular portion of the chain corresponds to 1–48 (MGTKPTEQVSWGLYSGYDEEAYSVGPLPELCYKADVQAFSRAFQPSVS). Residues 49-69 (LMVAVLGLAGNGLVLATHLAA) form a helical membrane-spanning segment. At 70–80 (RRTTRSPTSVH) the chain is on the cytoplasmic side. Residues 81 to 101 (LLQLALADLLLALTLPFAAAG) form a helical membrane-spanning segment. Residues 102–115 (ALQGWNLGSTTCRA) lie on the Extracellular side of the membrane. A disulfide bridge connects residues cysteine 113 and cysteine 191. A helical transmembrane segment spans residues 116–136 (ISGLYSASFHAGFLFLACISA). The Cytoplasmic segment spans residues 137 to 159 (DRYVAIARALPAGQRPSTPSRAH). The helical transmembrane segment at 160 to 180 (LVSVFVWLLSLFLALPALLFS) threads the bilayer. Residues 181–208 (RDGPREGQRRCRLIFPESLTQTVKGASA) lie on the Extracellular side of the membrane. A helical transmembrane segment spans residues 209-229 (VAQVVLGFALPLGVMAACYAL). Over 230-247 (LGRTLLAARGPERRRALR) the chain is Cytoplasmic. The chain crosses the membrane as a helical span at residues 248-268 (VVVALVVAFVVLQLPYSLALL). The Extracellular segment spans residues 269–291 (LDTADLLAARERSCSSSKRKDLA). A helical transmembrane segment spans residues 292-312 (LLVTGGLTLVRCSLNPVLYAF). Over 313 to 362 (LGLRFRRDLRRLLQGGGCSPKPNPRGRCPRRLRLSSCSAPTETHSLSWDN) the chain is Cytoplasmic.

The protein belongs to the G-protein coupled receptor 1 family. In terms of tissue distribution, expressed at high levels in small intestine, colon, lymph nodes, Peyer patches and at lower levels in thymus, lung and spleen.

The protein localises to the cell membrane. Functionally, receptor for chemokines SCYA27 and SCYA28. Subsequently transduces a signal by increasing the intracellular calcium ions level. The sequence is that of C-C chemokine receptor type 10 (Ccr10) from Mus musculus (Mouse).